Consider the following 720-residue polypeptide: MAAPVGLVKFWRPGTEGPGVSISEERQSLAENSGTTVVYNPYAALSIEQQRQKLPVFKLRNHILYLIENYQTVVIVGETGCGKSTQIPQYLAEAGWTAEGRVVGVTQPRRVAAVTVAGRVAEERGAVLGHEVGYCIRFDDCTDQLATRIKFLTDGMLVREMMVDPLLTKYSVIMLDEAHERTLYTDIAIGLLKKIQKKRGDLRLIVASATLDADKFRDFFNQNETSDPARDTCVILTVGGRTFPVDIFYLQSPVPDYIKSTVETVVKIHQTEGDGDILAFLTGQEEVETVVSMLIEQARALARTGMKRHLRVLPMYAGLPSFEQMKVFERVSRSVRKVIVATNVAETSITISGIVYVIDCGFVKLRAYNPRTAIECLVVVPVSQASANQRAGRGGRSRSGKCYRLYTEEAFDKLPQSTVPEMQRSNLAPVILQLKALGIDNVLRFHFMSPPPAQSMVQALELLYALGGLDKDCRLTEPLGMRIAEFPLNPMFAKMLLESGNFGCSQEILSIAAMMQIQNIFVVPPNQKSQAIRVHRKFAVEEGDHLTMLNVYEAFIKHNKNSQWCQEHFLNYKGLVRAATVREQLKKLLVKFQVPKKSSEGDPDPVLRCIVSGFFANAARFHSTGAYRTIRDDHELHIHPASVLYAEKPPRWVIYNEVIQTSKYYMRDVTAIESAWLLELAPHFYQQGTQACTLHVGRGRVFISILEHGYLACRDACTCL.

The region spanning Leu-64–Ala-229 is the Helicase ATP-binding domain. Gly-77–Ser-84 is an ATP binding site. Positions Asp-176–His-179 match the DEAH box motif. The 178-residue stretch at Thr-261 to Gly-438 folds into the Helicase C-terminal domain.

The protein belongs to the DEAD box helicase family. DEAH subfamily. As to quaternary structure, identified in the spliceosome C complex.

It carries out the reaction ATP + H2O = ADP + phosphate + H(+). May be involved in pre-mRNA splicing. The protein is Probable ATP-dependent RNA helicase DHX35 (DHX35) of Pongo abelii (Sumatran orangutan).